The following is a 310-amino-acid chain: Ribose-phosphate pyrophosphokinase (310 aa).

ATP-binding positions include 33 to 35 and 92 to 93; these read DGE and RQ. Positions 127 and 166 each coordinate Mg(2+). The active site involves K189. Residues R191, D215, and 219–223 contribute to the D-ribose 5-phosphate site; that span reads DTAGT.

This sequence belongs to the ribose-phosphate pyrophosphokinase family. Class I subfamily. As to quaternary structure, homohexamer. Requires Mg(2+) as cofactor.

It localises to the cytoplasm. It carries out the reaction D-ribose 5-phosphate + ATP = 5-phospho-alpha-D-ribose 1-diphosphate + AMP + H(+). Its pathway is metabolic intermediate biosynthesis; 5-phospho-alpha-D-ribose 1-diphosphate biosynthesis; 5-phospho-alpha-D-ribose 1-diphosphate from D-ribose 5-phosphate (route I): step 1/1. Its function is as follows. Involved in the biosynthesis of the central metabolite phospho-alpha-D-ribosyl-1-pyrophosphate (PRPP) via the transfer of pyrophosphoryl group from ATP to 1-hydroxyl of ribose-5-phosphate (Rib-5-P). This is Ribose-phosphate pyrophosphokinase from Bordetella pertussis (strain Tohama I / ATCC BAA-589 / NCTC 13251).